The following is a 185-amino-acid chain: Protein GrpE (185 aa).

The interval 1–44 (MSEEELTNGPGPEPQPEPLEVESAPLEAAPAGEPDKALLEAQQQ) is disordered.

It belongs to the GrpE family. As to quaternary structure, homodimer.

Its subcellular location is the cytoplasm. Its function is as follows. Participates actively in the response to hyperosmotic and heat shock by preventing the aggregation of stress-denatured proteins, in association with DnaK and GrpE. It is the nucleotide exchange factor for DnaK and may function as a thermosensor. Unfolded proteins bind initially to DnaJ; upon interaction with the DnaJ-bound protein, DnaK hydrolyzes its bound ATP, resulting in the formation of a stable complex. GrpE releases ADP from DnaK; ATP binding to DnaK triggers the release of the substrate protein, thus completing the reaction cycle. Several rounds of ATP-dependent interactions between DnaJ, DnaK and GrpE are required for fully efficient folding. This Methylococcus capsulatus (strain ATCC 33009 / NCIMB 11132 / Bath) protein is Protein GrpE.